Here is a 113-residue protein sequence, read N- to C-terminus: UPF0482 protein YnfB (113 aa).

Residues 1 to 28 (MKITLSKRIGLLAFLLPCALALSTTVHA) form the signal peptide.

The protein belongs to the UPF0482 family.

In Shigella dysenteriae serotype 1 (strain Sd197), this protein is UPF0482 protein YnfB.